A 165-amino-acid chain; its full sequence is MPAWLTNRTIYFLCFLAIAGLMGFAFYLQYVKDLEPCPLCMAQRIAFVLAGLVFLAAALHNPKNTGTTVYAFLGWVTTLGGAALATRQLWLQSLPADQVPACGPGLEYMLEAFPFSEVLTMMLTGTGECAEVQWTFLGLSIPGWTLVAFIGFTAVWAFAWVRRPR.

Residues 1–10 (MPAWLTNRTI) lie on the Cytoplasmic side of the membrane. A helical transmembrane segment spans residues 11 to 27 (YFLCFLAIAGLMGFAFY). At 28–45 (LQYVKDLEPCPLCMAQRI) the chain is on the periplasmic side. C37 and C40 form a disulfide bridge. Residues 46 to 62 (AFVLAGLVFLAAALHNP) traverse the membrane as a helical segment. Residues 63–68 (KNTGTT) are Cytoplasmic-facing. Residues 69–86 (VYAFLGWVTTLGGAALAT) traverse the membrane as a helical segment. Residues 87-143 (RQLWLQSLPADQVPACGPGLEYMLEAFPFSEVLTMMLTGTGECAEVQWTFLGLSIPG) lie on the Periplasmic side of the membrane. Cysteines 102 and 129 form a disulfide. The helical transmembrane segment at 144 to 162 (WTLVAFIGFTAVWAFAWVR) threads the bilayer. The Cytoplasmic segment spans residues 163–165 (RPR).

The protein belongs to the DsbB family.

The protein localises to the cell inner membrane. Required for disulfide bond formation in some periplasmic proteins. Acts by oxidizing the DsbA protein. The chain is Disulfide bond formation protein B from Hahella chejuensis (strain KCTC 2396).